A 106-amino-acid polypeptide reads, in one-letter code: Urease subunit beta (106 aa).

This sequence belongs to the urease beta subunit family. In terms of assembly, heterotrimer of UreA (gamma), UreB (beta) and UreC (alpha) subunits. Three heterotrimers associate to form the active enzyme.

It localises to the cytoplasm. It carries out the reaction urea + 2 H2O + H(+) = hydrogencarbonate + 2 NH4(+). It participates in nitrogen metabolism; urea degradation; CO(2) and NH(3) from urea (urease route): step 1/1. In Synechococcus sp. (strain CC9311), this protein is Urease subunit beta.